A 325-amino-acid chain; its full sequence is Olfactory receptor 1S1 (325 aa).

Topologically, residues 1–38 (MKTFSSFLQIGRNMHQGNQTTITEFILLGFFKQDEHQN) are extracellular. N-linked (GlcNAc...) asparagine glycosylation occurs at asparagine 18. Residues 39–62 (LLFVLFLGMYLVTVIGNGLIIVAI) traverse the membrane as a helical segment. Over 63–70 (SLDTYLHT) the chain is Cytoplasmic. The helical transmembrane segment at 71 to 92 (PMYLFLANLSFADISSISNSVP) threads the bilayer. At 93-113 (KMLVNIQTKSQSISYESCITQ) the chain is on the extracellular side. An intrachain disulfide couples cysteine 110 to cysteine 202. The chain crosses the membrane as a helical span at residues 114-133 (MYFSIVFVVIDNLLLGTMAY). Over 134–152 (DHFVAICHPLNYTILMRPR) the chain is Cytoplasmic. Residues 153–171 (FGILLTVISWFLSNIIALT) traverse the membrane as a helical segment. At 172-208 (HTLLLIQLLFCNHNTLPHFFCDLAPLLKLSCSDTLIN) the chain is on the extracellular side. A helical transmembrane segment spans residues 209 to 232 (ELVLFIVGLSVIIFPFTLSFFSYV). The Cytoplasmic segment spans residues 233-249 (CIIRAVLRVSSTQGKWK). The chain crosses the membrane as a helical span at residues 250–272 (AFSTCGSHLTVVLLFYGTIVGVY). Topologically, residues 273–285 (FFPSSTHPEDTDK) are extracellular. The chain crosses the membrane as a helical span at residues 286–305 (IGAVLFTVVTPMINPFIYSL). Residues 306–325 (RNKDMKGALRKLINRKISSL) are Cytoplasmic-facing.

The protein belongs to the G-protein coupled receptor 1 family.

The protein localises to the cell membrane. Its function is as follows. Odorant receptor. This chain is Olfactory receptor 1S1 (OR1S1), found in Homo sapiens (Human).